The chain runs to 538 residues: Spindle pole body protein CSA6 (538 aa).

Disordered regions lie at residues M1–L31 and Q57–D129. Basic and acidic residues-rich tracts occupy residues P18 to D30 and Q57 to P68. 2 stretches are compositionally biased toward polar residues: residues K86–T96 and T104–N122. Positions K144–D237 form a coiled coil. Basic and acidic residues predominate over residues K304–T323. Disordered stretches follow at residues K304–M338 and S355–Y458. Polar residues-rich tracts occupy residues S355–Y392 and T407–Q425. Residues S426 to L444 show a composition bias toward basic and acidic residues. Residues R446–K457 are compositionally biased toward polar residues.

It localises to the cytoplasm. Its subcellular location is the cytoskeleton. The protein localises to the microtubule organizing center. The protein resides in the spindle pole body. In terms of biological role, plays a role in mitotic spindle pole body organization, possibly at the point of spindle pole body separation. Required for mitotic exit. The sequence is that of Spindle pole body protein CSA6 from Candida albicans (strain SC5314 / ATCC MYA-2876) (Yeast).